We begin with the raw amino-acid sequence, 229 residues long: Meiotically up-regulated gene 31 protein (229 aa).

Disordered regions lie at residues 16–68 and 189–229; these read EDSA…EEDK and GLPE…TTWA.

Its subcellular location is the endoplasmic reticulum. Its function is as follows. Has a role in meiosis. This is Meiotically up-regulated gene 31 protein (mug31) from Schizosaccharomyces pombe (strain 972 / ATCC 24843) (Fission yeast).